A 360-amino-acid chain; its full sequence is Phenylalanine--tRNA ligase alpha subunit (360 aa).

Glu-260 serves as a coordination point for Mg(2+).

This sequence belongs to the class-II aminoacyl-tRNA synthetase family. Phe-tRNA synthetase alpha subunit type 1 subfamily. In terms of assembly, tetramer of two alpha and two beta subunits. Mg(2+) is required as a cofactor.

The protein resides in the cytoplasm. The enzyme catalyses tRNA(Phe) + L-phenylalanine + ATP = L-phenylalanyl-tRNA(Phe) + AMP + diphosphate + H(+). The sequence is that of Phenylalanine--tRNA ligase alpha subunit from Rhizobium etli (strain ATCC 51251 / DSM 11541 / JCM 21823 / NBRC 15573 / CFN 42).